A 63-amino-acid chain; its full sequence is Small ribosomal subunit protein eS31 (63 aa).

The Zn(2+) site is built by C31, C34, C50, and C53. The C4-type zinc finger occupies C31 to C53.

The protein belongs to the eukaryotic ribosomal protein eS31 family. As to quaternary structure, part of the 30S ribosomal subunit. The cofactor is Zn(2+).

This is Small ribosomal subunit protein eS31 from Sulfurisphaera tokodaii (strain DSM 16993 / JCM 10545 / NBRC 100140 / 7) (Sulfolobus tokodaii).